We begin with the raw amino-acid sequence, 228 residues long: Dehydrin Rab25 (228 aa).

2 disordered regions span residues 1–68 (MAEH…EAPH) and 115–228 (AGVT…HGHH). Composition is skewed to basic and acidic residues over residues 169 to 187 (KEKI…EQKQ) and 212 to 228 (KGIV…HGHH).

The protein belongs to the plant dehydrin family.

This Oryza sativa subsp. japonica (Rice) protein is Dehydrin Rab25 (RAB25).